Reading from the N-terminus, the 211-residue chain is Probable nicotinate-nucleotide adenylyltransferase (211 aa).

The protein belongs to the NadD family.

It carries out the reaction nicotinate beta-D-ribonucleotide + ATP + H(+) = deamido-NAD(+) + diphosphate. It participates in cofactor biosynthesis; NAD(+) biosynthesis; deamido-NAD(+) from nicotinate D-ribonucleotide: step 1/1. Functionally, catalyzes the reversible adenylation of nicotinate mononucleotide (NaMN) to nicotinic acid adenine dinucleotide (NaAD). In Legionella pneumophila (strain Corby), this protein is Probable nicotinate-nucleotide adenylyltransferase.